Reading from the N-terminus, the 104-residue chain is Flagellar hook-basal body complex protein FliE (104 aa).

Belongs to the FliE family.

It is found in the bacterial flagellum basal body. The chain is Flagellar hook-basal body complex protein FliE from Escherichia coli (strain 55989 / EAEC).